Reading from the N-terminus, the 928-residue chain is Retinoblastoma-associated protein (928 aa).

The disordered stretch occupies residues 1-42 (MPPKTPRKTAATAAAAAAEPPAPPPPPPPEEDPEQDSGPEDL). N,N-dimethylproline is present on Pro-2. Residues 8 to 19 (KTAATAAAAAAE) show a composition bias toward low complexity. A compositionally biased stretch (acidic residues) spans 29–39 (PEEDPEQDSGP). At Ser-37 the chain carries Phosphoserine. Ser-249 is subject to Phosphoserine; by CDK1. Thr-252 bears the Phosphothreonine; by CDK1 mark. Thr-356 carries the phosphothreonine modification. Thr-373 carries the post-translational modification Phosphothreonine; by CDK1. A domain A region spans residues 373-579 (TPVRTVMNTI…FDLIKQSKDR (207 aa)). The segment at 373–771 (TPVRTVMNTI…QRLKTNILQY (399 aa)) is pocket; binds T and E1A. Residue Ser-567 is modified to Phosphoserine; by CDK2. The tract at residues 580–639 (EGPTDHLESACPLNLPLQNNHTAADMYLSPVRSPKKKGSTTRVNSTANAETQATSAFQTQ) is spacer. Residue Ser-608 is modified to Phosphoserine. Positions 610 to 632 (VRSPKKKGSTTRVNSTANAETQA) are disordered. Phosphoserine; by CHEK2 and CHEK1 is present on Ser-612. Residues 619 to 632 (TTRVNSTANAETQA) are compositionally biased toward polar residues. Ser-624 bears the Phosphoserine mark. A domain B region spans residues 640–771 (KPLKSTSLSL…QRLKTNILQY (132 aa)). Positions 763 to 928 (RLKTNILQYA…SMDTSNKEEK (166 aa)) are interaction with LIMD1. Residues 771 to 928 (YASTRPPTLS…SMDTSNKEEK (158 aa)) form a domain C; mediates interaction with E4F1 region. Phosphoserine is present on residues Ser-780, Ser-788, and Ser-795. Ser-807 is subject to Phosphoserine; by CDK1 and CDK3. Lys-810 carries the N6-methyllysine; by SMYD2 modification. Ser-811 bears the Phosphoserine; by CDK1 and CDK3 mark. Phosphothreonine; by CDK6 is present on Thr-821. A Phosphothreonine modification is found at Thr-823. The residue at position 826 (Thr-826) is a Phosphothreonine; by CDK4. Phosphothreonine is present on Thr-841. At Ser-855 the chain carries Phosphoserine. Lys-860 carries the post-translational modification N6-methyllysine; by SMYD2. A Bipartite nuclear localization signal motif is present at residues 860–876 (KRSAEGSNPPKPLKKLR). The tract at residues 860 to 928 (KRSAEGSNPP…SMDTSNKEEK (69 aa)) is disordered. N6-acetyllysine; by PCAF occurs at positions 873 and 874. Residues 915–928 (KMNDSMDTSNKEEK) show a composition bias toward basic and acidic residues.

It belongs to the retinoblastoma protein (RB) family. The hypophosphorylated form interacts with and sequesters the E2F1 transcription factor, thereby inhibiting E2F1 transcription. Interacts with heterodimeric E2F/DP transcription factor complexes containing TFDP1 and either E2F1, E2F3, E2F4 or E2F5, or TFDP2 and E2F4. Interacts (when hyperphosphorylated and hypophosphorylated) with PKP3; the interaction inhibits RB1 interaction with and repression of the transcription factor E2F1, potentially via sequestering RB1 to the cytoplasm. The unphosphorylated form interacts with EID1, ARID3B, KDM5A, SUV39H1, MJD2A/JHDM3A and THOC1. Interacts with the N-terminal domain of TAF1. Interacts with SNW1, ATAD5, AATF, DNMT1, LIN9, LMNA, KMT5B, KMT5C, PELP1, UHRF2 and TMPO-alpha. Interacts with GRIP1 and UBR4. Interacts with ARID4A and KDM5B. Interacts with E4F1 and LIMD1. Interacts with SMARCA4/BRG1 and HDAC1. Interacts with PSMA3 and USP4. Interacts (when methylated at Lys-860) with L3MBTL1. Interacts with CHEK2; phosphorylates RB1. Interacts with CDK1 and CDK2. Interacts with PRMT2. Interacts with CEBPA. P-TEFB complex interacts with RB1; promotes phosphorylation of RB1. Interacts with RBBP9; the interaction disrupts RB1 binding to E2F1. Interacts with KAT2B/PCAF and EP300/P300. Interacts with PAX5. Interacts (phosphorylated and unphosphorylated) with BLCAP. May interact with NDC80. As to quaternary structure, (Microbial infection) Interacts with adenovirus E1A protein. In terms of assembly, (Microbial infection) Interacts with HPV E7 protein. (Microbial infection) Interacts with SV40 large T antigen. As to quaternary structure, (Microbial infection) Interacts with human cytomegalovirus/HHV-5 proteins UL82 and UL123. In terms of assembly, (Microbial infection) Interacts with molluscum contagiosum virus protein MC007. Phosphorylated by CDK6 and CDK4, and subsequently by CDK2 at Ser-567 in G1, thereby releasing E2F1 which is then able to activate cell growth. Dephosphorylated at the late M phase. SV40 large T antigen, HPV E7 and adenovirus E1A bind to the underphosphorylated, active form of pRb. Phosphorylation at Thr-821 and Thr-826 promotes interaction between the C-terminal domain C and the Pocket domain, and thereby inhibits interactions with heterodimeric E2F/DP transcription factor complexes. Dephosphorylated at Ser-795 by calcineruin upon calcium stimulation. CDK3/cyclin-C-mediated phosphorylation at Ser-807 and Ser-811 is required for G0-G1 transition. Phosphorylated by CDK1 and CDK2 upon TGFB1-mediated apoptosis. Post-translationally, N-terminus is methylated by METTL11A/NTM1. Monomethylation at Lys-810 by SMYD2 enhances phosphorylation at Ser-807 and Ser-811, and promotes cell cycle progression. Monomethylation at Lys-860 by SMYD2 promotes interaction with L3MBTL1. In terms of processing, acetylated during keratinocyte differentiation. Acetylation at Lys-873 and Lys-874 regulates subcellular localization. Can be deacetylated by SIRT1. Expressed in the retina. Expressed in foreskin keratinocytes (at protein level).

It is found in the nucleus. The protein resides in the cytoplasm. Tumor suppressor that is a key regulator of the G1/S transition of the cell cycle. The hypophosphorylated form binds transcription regulators of the E2F family, preventing transcription of E2F-responsive genes. Both physically blocks E2Fs transactivating domain and recruits chromatin-modifying enzymes that actively repress transcription. Cyclin and CDK-dependent phosphorylation of RB1 induces its dissociation from E2Fs, thereby activating transcription of E2F responsive genes and triggering entry into S phase. RB1 also promotes the G0-G1 transition upon phosphorylation and activation by CDK3/cyclin-C. Directly involved in heterochromatin formation by maintaining overall chromatin structure and, in particular, that of constitutive heterochromatin by stabilizing histone methylation. Recruits and targets histone methyltransferases SUV39H1, KMT5B and KMT5C, leading to epigenetic transcriptional repression. Controls histone H4 'Lys-20' trimethylation. Inhibits the intrinsic kinase activity of TAF1. Mediates transcriptional repression by SMARCA4/BRG1 by recruiting a histone deacetylase (HDAC) complex to the c-FOS promoter. In resting neurons, transcription of the c-FOS promoter is inhibited by BRG1-dependent recruitment of a phospho-RB1-HDAC1 repressor complex. Upon calcium influx, RB1 is dephosphorylated by calcineurin, which leads to release of the repressor complex. Functionally, (Microbial infection) In case of viral infections, interactions with SV40 large T antigen, HPV E7 protein or adenovirus E1A protein induce the disassembly of RB1-E2F1 complex thereby disrupting RB1's activity. This is Retinoblastoma-associated protein (RB1) from Homo sapiens (Human).